Consider the following 590-residue polypeptide: Transcription factor bHLH13 (590 aa).

2 disordered regions span residues 274 to 296 and 385 to 439; these read LQHH…HRQF and AASS…EAER. Residues 281–293 are compositionally biased toward low complexity; sequence QQQQQQPPQQQQH. A compositionally biased stretch (basic residues) spans 416–425; that stretch reads RPRKRGRRPA. In terms of domain architecture, bHLH spans 429-478; it reads AEALNHVEAERQRREKLNQRFYALRSVVPNISKMDKASLLGDAVSYINEL.

As to quaternary structure, homodimer.

The protein localises to the nucleus. The polypeptide is Transcription factor bHLH13 (BHLH13) (Arabidopsis thaliana (Mouse-ear cress)).